Here is a 126-residue protein sequence, read N- to C-terminus: Fluoride-specific ion channel FluC (126 aa).

4 consecutive transmembrane segments (helical) span residues 4–24, 33–53, 67–87, and 97–117; these read PLLSIALGSVLGAWLRWFLGL, IPLGTVTVNLVGGFIIGFAMA, FVITGFCGALTTFSTFSIEIV, and MAMLAISIHLIGSLIFTCLGL. Na(+)-binding residues include glycine 74 and threonine 77.

Belongs to the fluoride channel Fluc/FEX (TC 1.A.43) family.

The protein resides in the cell inner membrane. It catalyses the reaction fluoride(in) = fluoride(out). Na(+) is not transported, but it plays an essential structural role and its presence is essential for fluoride channel function. Functionally, fluoride-specific ion channel. Important for reducing fluoride concentration in the cell, thus reducing its toxicity. The chain is Fluoride-specific ion channel FluC from Acinetobacter baumannii (strain AB307-0294).